Reading from the N-terminus, the 126-residue chain is Aspartate 1-decarboxylase (126 aa).

S25 (schiff-base intermediate with substrate; via pyruvic acid) is an active-site residue. A Pyruvic acid (Ser) modification is found at S25. Position 57 (T57) interacts with substrate. Catalysis depends on Y58, which acts as the Proton donor. 73–75 serves as a coordination point for substrate; that stretch reads GAA.

Belongs to the PanD family. As to quaternary structure, heterooctamer of four alpha and four beta subunits. Requires pyruvate as cofactor. Is synthesized initially as an inactive proenzyme, which is activated by self-cleavage at a specific serine bond to produce a beta-subunit with a hydroxyl group at its C-terminus and an alpha-subunit with a pyruvoyl group at its N-terminus.

It localises to the cytoplasm. It catalyses the reaction L-aspartate + H(+) = beta-alanine + CO2. The protein operates within cofactor biosynthesis; (R)-pantothenate biosynthesis; beta-alanine from L-aspartate: step 1/1. Its function is as follows. Catalyzes the pyruvoyl-dependent decarboxylation of aspartate to produce beta-alanine. This is Aspartate 1-decarboxylase from Escherichia coli O6:K15:H31 (strain 536 / UPEC).